We begin with the raw amino-acid sequence, 384 residues long: uncharacterized protein (384 aa).

Residues 1–116 (MTEMPKKKFS…FPAAPPPMDS (116 aa)) are disordered. Composition is skewed to basic and acidic residues over residues 14 to 70 (ARGD…RAGD) and 78 to 95 (RFKDKDRDKPRYGDDRPR). Residues Gly-318, Ile-338, and Leu-347 each coordinate S-adenosyl-L-methionine.

It belongs to the class IV-like SAM-binding methyltransferase superfamily. RNA methyltransferase TrmH family.

This is an uncharacterized protein from Synechocystis sp. (strain ATCC 27184 / PCC 6803 / Kazusa).